The sequence spans 362 residues: Quinolone epoxide rearrangement protein penF (362 aa).

Histidine 220 is an active-site residue. Glutamate 222 acts as the Broensted acid in catalysis.

This sequence belongs to the quinolone epoxide rearrangement protein penF family.

It carries out the reaction [(1'E)-5'-(3',3'-dimethyloxiran-2'-yl)-3'-hydroxy-3'-methylpent-1'-en-1'-yl]-quinolinone B = yaequinolone D. It functions in the pathway secondary metabolite biosynthesis. The protein operates within alkaloid biosynthesis. Its pathway is mycotoxin biosynthesis. Quinolone epoxide rearrangement protein; part of the gene cluster that mediates the biosynthesis of penigequinolones, potent insecticidal alkaloids that contain a highly modified 10-carbon prenyl group. The first stage is catalyzed by the nonribosomal peptide synthetase penN that condenses anthranilic acid and O-methyl-L-tyrosine to produce 4'-methoxycyclopeptin. 4'-methoxycyclopeptin is then converted to 4'-methoxydehydrocyclopeptin by the ketoglutarate-dependent dioxygenase penM through dehydrogenation to form a double bond between C-alpha and C-beta of the O-methyltyrosine side chain. PenM also converts its first product methoxydehydrocyclopeptin to 4'-methoxycyclopenin. The following conversion of 4'methoxycyclopenin into 4'-methoxyviridicatin is catalyzed by the cyclopenase penL. 4'-methoxyviridicatin is the precursor of quinolone natural products, and is further converted to quinolinone B. The prenyltransferase penI then catalyzes the canonical Friedel-Crafts alkylation of quinolinone B with dimethylallyl cation to yield dimethylallyl quinolone, which is subjected to FAD-dependent dehydrogenation by the FAD-linked oxidoreductase penH to yield conjugated aryl diene. The delta(3') double bond then serves as the site of the second alkylation with DMAPP catalyzed by the prenyltransferase penG to yield a carbenium ion intermediate, which can be attacked by H(2)O to yield a styrenyl quinolone containing a C3'-hydroxyprenyl chain, or undergo cyclization to yield yaequinolones J1 and J2. The conversion of the styrenyl quinolone into the tetrahydrofuran-containing yaequinolone C is performed by the FAD-dependent monooxygenase penE and involves epoxidation of the terminal C7'-C8' olefin, followed by epoxide ring opening initiated by the C3' hydroxyl group. The predicted cysteine hydrolase penJ acts as an epoxide hydrolase that enhances the rate of the 5-exo-tet cyclization step, increasing the yield of yaequinolone C. PenF catalyzes the cationic rearrangement of the epoxide formed by penE (before ring opening to produce yaequinolone C) into yaequinolone D. Finally, the short-chain dehydrogenase/reductase (SDR)-like reductase penD, catalyzes both the dehydration of yaequinolone D and the reduction of the resulting oxonium to yield penigequinolone. In Penicillium thymicola, this protein is Quinolone epoxide rearrangement protein penF.